We begin with the raw amino-acid sequence, 396 residues long: Tryptophan synthase beta chain (396 aa).

K86 bears the N6-(pyridoxal phosphate)lysine mark.

Belongs to the TrpB family. Tetramer of two alpha and two beta chains. The cofactor is pyridoxal 5'-phosphate.

The enzyme catalyses (1S,2R)-1-C-(indol-3-yl)glycerol 3-phosphate + L-serine = D-glyceraldehyde 3-phosphate + L-tryptophan + H2O. Its pathway is amino-acid biosynthesis; L-tryptophan biosynthesis; L-tryptophan from chorismate: step 5/5. Functionally, the beta subunit is responsible for the synthesis of L-tryptophan from indole and L-serine. The protein is Tryptophan synthase beta chain of Pectobacterium atrosepticum (strain SCRI 1043 / ATCC BAA-672) (Erwinia carotovora subsp. atroseptica).